The following is a 334-amino-acid chain: GTPase Obg (334 aa).

The Obg domain occupies methionine 1 to leucine 159. In terms of domain architecture, OBG-type G spans alanine 160–glutamine 331. GTP-binding positions include glycine 166–serine 173, phenylalanine 191–tyrosine 195, aspartate 212–glycine 215, asparagine 282–aspartate 285, and serine 312–alanine 314. Mg(2+) contacts are provided by serine 173 and threonine 193.

This sequence belongs to the TRAFAC class OBG-HflX-like GTPase superfamily. OBG GTPase family. Monomer. The cofactor is Mg(2+).

It is found in the cytoplasm. Functionally, an essential GTPase which binds GTP, GDP and possibly (p)ppGpp with moderate affinity, with high nucleotide exchange rates and a fairly low GTP hydrolysis rate. Plays a role in control of the cell cycle, stress response, ribosome biogenesis and in those bacteria that undergo differentiation, in morphogenesis control. The polypeptide is GTPase Obg (Francisella tularensis subsp. holarctica (strain FTNF002-00 / FTA)).